Here is a 142-residue protein sequence, read N- to C-terminus: Putative pre-16S rRNA nuclease (142 aa).

It belongs to the YqgF nuclease family.

Its subcellular location is the cytoplasm. Could be a nuclease involved in processing of the 5'-end of pre-16S rRNA. This chain is Putative pre-16S rRNA nuclease, found in Chloroflexus aggregans (strain MD-66 / DSM 9485).